An 81-amino-acid polypeptide reads, in one-letter code: High-potential iron-sulfur protein (81 aa).

[4Fe-4S] cluster-binding residues include cysteine 43, cysteine 46, cysteine 59, and cysteine 73.

The protein belongs to the high-potential iron-sulfur protein (HiPIP) family. As to quaternary structure, homodimer.

Its subcellular location is the periplasm. In terms of biological role, specific class of high-redox-potential 4Fe-4S ferredoxins. Functions in anaerobic electron transport in most purple and in some other photosynthetic bacteria and in at least one genus (Paracoccus) of halophilic, denitrifying bacteria. The sequence is that of High-potential iron-sulfur protein from Halochromatium salexigens (Chromatium salexigens).